The chain runs to 193 residues: NADH-quinone oxidoreductase subunit B (193 aa).

Positions 72, 73, 137, and 167 each coordinate [4Fe-4S] cluster.

This sequence belongs to the complex I 20 kDa subunit family. As to quaternary structure, NDH-1 is composed of 14 different subunits. Subunits NuoB, C, D, E, F, and G constitute the peripheral sector of the complex. [4Fe-4S] cluster is required as a cofactor.

Its subcellular location is the cell inner membrane. The enzyme catalyses a quinone + NADH + 5 H(+)(in) = a quinol + NAD(+) + 4 H(+)(out). In terms of biological role, NDH-1 shuttles electrons from NADH, via FMN and iron-sulfur (Fe-S) centers, to quinones in the respiratory chain. The immediate electron acceptor for the enzyme in this species is believed to be ubiquinone. Couples the redox reaction to proton translocation (for every two electrons transferred, four hydrogen ions are translocated across the cytoplasmic membrane), and thus conserves the redox energy in a proton gradient. The chain is NADH-quinone oxidoreductase subunit B from Bartonella quintana (strain Toulouse) (Rochalimaea quintana).